The primary structure comprises 552 residues: DUF724 domain-containing protein 10 (552 aa).

A disordered region spans residues 308–361; the sequence is SSLTQGSGDKTEVETQRKTFPKKTLPRNQNGSGNDSTLENENSNRKRKREENLC. Positions 333 to 348 are enriched in polar residues; it reads PRNQNGSGNDSTLENE. The DUF724 domain occupies 371–543; the sequence is ILFEKKLPVW…LEFQATASAP (173 aa).

In terms of tissue distribution, expressed at low levels in leaves, stems, flowers and siliques.

May be involved in the polar growth of plant cells via transportation of RNAs. The sequence is that of DUF724 domain-containing protein 10 from Arabidopsis thaliana (Mouse-ear cress).